Consider the following 36-residue polypeptide: Phospholipase A2 hemilipin-2 (36 aa).

It belongs to the phospholipase A2 family. Group III subfamily. In terms of assembly, heterodimer composed of a small subunit and a large subunit; disulfid-linked. It depends on Ca(2+) as a cofactor. In terms of tissue distribution, expressed by the venom gland.

The protein resides in the secreted. It catalyses the reaction a 1,2-diacyl-sn-glycero-3-phosphocholine + H2O = a 1-acyl-sn-glycero-3-phosphocholine + a fatty acid + H(+). In terms of biological role, scorpion venom phospholipase A2 (PLA2) that impacts angiogenesis in vitro and in vivo without showing any cytotoxic or apoptotic signs. The antiangiogenic effect is independent from the catalytic activity and seems to be held by its small subunit. PLA2 catalyzes the calcium-dependent hydrolysis of the 2-acyl groups in 3-sn-phosphoglycerides. This Hemiscorpius lepturus (Scorpion) protein is Phospholipase A2 hemilipin-2.